The chain runs to 110 residues: Large ribosomal subunit protein uL22 (110 aa).

Belongs to the universal ribosomal protein uL22 family. Part of the 50S ribosomal subunit.

This protein binds specifically to 23S rRNA; its binding is stimulated by other ribosomal proteins, e.g. L4, L17, and L20. It is important during the early stages of 50S assembly. It makes multiple contacts with different domains of the 23S rRNA in the assembled 50S subunit and ribosome. In terms of biological role, the globular domain of the protein is located near the polypeptide exit tunnel on the outside of the subunit, while an extended beta-hairpin is found that lines the wall of the exit tunnel in the center of the 70S ribosome. In Delftia acidovorans (strain DSM 14801 / SPH-1), this protein is Large ribosomal subunit protein uL22.